Consider the following 96-residue polypeptide: Protein S100-A10 (96 aa).

The segment at Asp62 to Ser73 is ancestral calcium site.

This sequence belongs to the S-100 family. Tetramer of 2 light chains (p10) and 2 heavy chains (annexin II).

Its function is as follows. Because p10 induces the dimerization of annexin II (p36), it may function as a regulator of protein phosphorylation in that the p36 monomer is the preferred target (in vitro) of tyrosine-specific kinase. This Xenopus laevis (African clawed frog) protein is Protein S100-A10 (s100a10).